The chain runs to 388 residues: Serpin B11 (388 aa).

Residues 338-362 (EEGTEAAAATGESISVKRLPVTVQF) are RCL.

This sequence belongs to the serpin family. Ov-serpin subfamily. As to expression, expressed in eye, lung, lymphocytes, thymus, stomach, uterus, heart, brain, liver, skeletal muscle, and in day 7, 15, and 17 embryos.

It is found in the cytoplasm. Inhibitor of serine proteases. Has moderate inhibitory activity for trypsin-like peptidases, but also some activity with cysteine peptidases, cathepsin L, K, and V, and the serine peptidase, tryptase gamma. This Mus musculus (Mouse) protein is Serpin B11 (Serpinb11).